Reading from the N-terminus, the 467-residue chain is Glutamate--tRNA ligase (467 aa).

Positions 13-23 match the 'HIGH' region motif; sequence PSPTGFLHLGG. Residues 118 to 133 show a composition bias toward basic and acidic residues; the sequence is ARGDKPRYDGTWRPEP. Residues 118-141 are disordered; it reads ARGDKPRYDGTWRPEPGKTLPAIP. A 'KMSKS' region motif is present at residues 245-249; the sequence is KLSKR. Lys-248 is a binding site for ATP.

Belongs to the class-I aminoacyl-tRNA synthetase family. Glutamate--tRNA ligase type 1 subfamily. Monomer.

It localises to the cytoplasm. It catalyses the reaction tRNA(Glu) + L-glutamate + ATP = L-glutamyl-tRNA(Glu) + AMP + diphosphate. Functionally, catalyzes the attachment of glutamate to tRNA(Glu) in a two-step reaction: glutamate is first activated by ATP to form Glu-AMP and then transferred to the acceptor end of tRNA(Glu). The sequence is that of Glutamate--tRNA ligase from Bordetella avium (strain 197N).